We begin with the raw amino-acid sequence, 321 residues long: Phospho-N-acetylmuramoyl-pentapeptide-transferase (321 aa).

Helical transmembrane passes span 6–26 (IFIP…LFIG), 54–74 (MGGV…GLFF), 77–97 (FTPS…LGYL), 117–137 (LIGQ…EGFS), 143–163 (FGVA…FWLV), 175–195 (IDGL…IIAW), 200–220 (FDVV…FPYN), 226–246 (IFMG…ISII), 251–271 (WTLL…ILQV), and 301–321 (IDFV…WILF).

The protein belongs to the glycosyltransferase 4 family. MraY subfamily. Requires Mg(2+) as cofactor.

It is found in the cell membrane. It catalyses the reaction UDP-N-acetyl-alpha-D-muramoyl-L-alanyl-gamma-D-glutamyl-L-lysyl-D-alanyl-D-alanine + di-trans,octa-cis-undecaprenyl phosphate = Mur2Ac(oyl-L-Ala-gamma-D-Glu-L-Lys-D-Ala-D-Ala)-di-trans,octa-cis-undecaprenyl diphosphate + UMP. It functions in the pathway cell wall biogenesis; peptidoglycan biosynthesis. Its function is as follows. Catalyzes the initial step of the lipid cycle reactions in the biosynthesis of the cell wall peptidoglycan: transfers peptidoglycan precursor phospho-MurNAc-pentapeptide from UDP-MurNAc-pentapeptide onto the lipid carrier undecaprenyl phosphate, yielding undecaprenyl-pyrophosphoryl-MurNAc-pentapeptide, known as lipid I. The polypeptide is Phospho-N-acetylmuramoyl-pentapeptide-transferase (Enterococcus faecalis (strain ATCC 700802 / V583)).